Reading from the N-terminus, the 1252-residue chain is Myosin-1 (1252 aa).

Residues 1–27 (MAPSKKAGKKVTPASKKSAGQGKVAKA) are disordered. In terms of domain architecture, Myosin motor spans 38 to 712 (VGVSDMTLLT…TLFALETMRD (675 aa)). 128–135 (GESGAGKT) is an ATP binding site. S356 carries the phosphoserine modification. Positions 403 to 485 (IIGILDIFGF…PGIFAALNDA (83 aa)) are actin-binding. 2 consecutive IQ domains span residues 716–736 (HNMAARIQRAFRNYMRYKHEC) and 737–762 (ARRIQRFWKNNKEGIAYAQTRDYGHQ). The region spanning 770 to 953 (RRRFSLLSYR…TVHVASGEPP (184 aa)) is the TH1 domain. Disordered stretches follow at residues 945 to 1049 (VHVA…PETP) and 1103 to 1228 (PPKA…PATA). Composition is skewed to pro residues over residues 989–999 (RSVPKPKPVAQ) and 1028–1046 (RPPPAPPRNIAPPPPPAKP). An SH3 domain is found at 1046–1104 (PETPMYRAKFAFEGQEGEMSLKKDDVVELVEKDDNGWWLVKMDGVEGWAPNNYLELVPP). Over residues 1162–1175 (ADTTPASSRPSSAI) the composition is skewed to polar residues. Positions 1178–1193 (KPPPPVAAKPKPPVIP) are enriched in pro residues. Positions 1194-1203 (VKPSVSAKGP) are enriched in low complexity. The segment covering 1204-1215 (AKPPIPTAPRPP) has biased composition (pro residues). The segment covering 1216 to 1228 (AASTSRSSKPATA) has biased composition (low complexity).

This sequence belongs to the TRAFAC class myosin-kinesin ATPase superfamily. Myosin family. Post-translationally, phosphorylation of the TEDS site (Ser-356) is required for the polarization of the actin cytoskeleton. Phosphorylation probably activates the myosin-I ATPase activity.

The protein localises to the cytoplasm. The protein resides in the cytoskeleton. It is found in the actin patch. Functionally, type-I myosin implicated in the organization of the actin cytoskeleton. Required for proper actin cytoskeleton polarization. At the cell cortex, assembles in patch-like structures together with proteins from the actin-polymerizing machinery and promotes actin assembly. Functions as actin nucleation-promoting factor (NPF) for the Arp2/3 complex. The sequence is that of Myosin-1 (MYO1) from Laccaria bicolor (strain S238N-H82 / ATCC MYA-4686) (Bicoloured deceiver).